Reading from the N-terminus, the 117-residue chain is Chondroitin proteoglycan 7 (117 aa).

The signal sequence occupies residues 1–19; it reads MQTITLLALLACIAVPIFA. The disordered stretch occupies residues 31–97; that stretch reads VEASGEGSGE…SGENLSNGIV (67 aa). 2 stretches are compositionally biased toward low complexity: residues 32–41 and 48–57; these read EASGEGSGES and ESSGEGSGES. Ser-66, Ser-70, Ser-74, Ser-84, and Ser-88 each carry an O-linked (Xyl...) (chondroitin sulfate) serine glycan. Residues 75–95 are compositionally biased toward low complexity; the sequence is GASDAVLESSGEGSGENLSNG. Asn-91 is a glycosylation site (N-linked (GlcNAc...) asparagine).

The sequence is that of Chondroitin proteoglycan 7 (cpg-7) from Caenorhabditis briggsae.